A 599-amino-acid polypeptide reads, in one-letter code: MEPMSVKEDLRLFQSTLLQDGLKELLKENKFVDCILKVGDRSLPCHRLIMAACSPYFRELYFTEDGTEKKDANKEVVLENVDPNIMDMIVNYLYSADIDITDDNVQDVFAVANKFQIPSVFTVCVNYLQNKLSLGNCLAIFRMGLVLNCPRLAVSARDFIAEHFETLSKDEEFLEFNAPEFFAIIGCDALNVEKEELVFELLMKWVRKNKENRAKALGDAFEHIRFRLLPEKYLKEKVEKDDIIKADPELIKKLKVIKDAFAGKLPQIKEGEKEGEGENELPGFLNDSQRLGMFNRDLILMINDTAAVAYDANENECFLAAMAEQIPRNHVSITSKKNLLYVAGGLFVDEENKDSPLQCYFYQMDPHSPNWIALPPMPSPRCLFAMGEFENLLFAVAGKDLQSNESLDSVLCYDVDKMKWLETKKLPLRIHGHSVISQNGLVYCIGGKTDENKTINKMFAYNHKKSEWKELAAMKTPRSMFGATVHKGKIVVVGGVNEDGLLSSCEAYDFGTNKWEVFAEFAQERSSVNVLSVDGVLYAVAGFTIKENEDKQCVPSEITDIWQYEEDKKQWSGMIGEMRYASGASCVSMRLNVAKMPKL.

One can recognise a BTB domain in the interval 32-102 (VDCILKVGDR…LYSADIDITD (71 aa)). Positions 137–239 (CLAIFRMGLV…PEKYLKEKVE (103 aa)) constitute a BACK domain. 5 Kelch repeats span residues 339–391 (LLYV…EFEN), 393–440 (LFAV…SQNG), 441–488 (LVYC…VHKG), 489–535 (KIVV…SVDG), and 537–591 (LYAV…SMRL).

The protein resides in the cytoplasm. It localises to the cytoskeleton. Its subcellular location is the sarcoplasmic reticulum membrane. The protein localises to the endoplasmic reticulum membrane. Functionally, involved in skeletal muscle development and differentiation. This chain is Kelch-like protein 41a (klhl41a), found in Danio rerio (Zebrafish).